Here is a 1121-residue protein sequence, read N- to C-terminus: Transcription factor CSR2 (1121 aa).

Residues Ser-23, Ser-46, and Ser-127 each carry the phosphoserine modification. 4 disordered regions span residues 273–342, 513–532, 579–600, and 837–860; these read PLHT…RSLP, HTQL…PQKL, LKRN…GLAM, and IPQD…LQTS. Residues 276 to 310 are compositionally biased toward polar residues; the sequence is TQRTSPSNTARTGNAMDTSNSDRASPASNNNTTDA. Composition is skewed to low complexity over residues 318–329, 519–529, and 582–597; these read NNNPMNNNNSPA, SRPRSSSISSP, and NNSN…SSSG. At Ser-327 the chain carries Phosphoserine. A compositionally biased stretch (basic and acidic residues) spans 837–846; the sequence is IPQDKNHNEV. Residue Lys-841 forms a Glycyl lysine isopeptide (Lys-Gly) (interchain with G-Cter in ubiquitin) linkage. A compositionally biased stretch (polar residues) spans 847-860; sequence NDTNGNSNTSLQTS. Ser-987 is modified (phosphoserine). A compositionally biased stretch (polar residues) spans 999–1009; the sequence is KTTAVSDSSNG. 2 disordered regions span residues 999–1022 and 1075–1121; these read KTTA…QARP and TPRY…EISS. Positions 1084–1093 are enriched in low complexity; that stretch reads TNTDYNYNDN.

It belongs to the CSR2 family. Phosphorylated by CDC28.

The protein localises to the cytoplasm. It is found in the nucleus. Its function is as follows. Transcription factor involved in the regulation of fermentation and aerobic oxidation. Acts as a repressor of CYC1, which is involved in electron flow through the mitochondria under aerobic condition. Required for pseudohyphal formation upon nitrogen starvation. May be involved in viability at stationary phase and aging. The chain is Transcription factor CSR2 (CSR2) from Saccharomyces cerevisiae (strain ATCC 204508 / S288c) (Baker's yeast).